The primary structure comprises 69 residues: Conotoxin Lt5.10 (69 aa).

The signal sequence occupies residues methionine 1–proline 19. Positions lysine 20–alanine 54 are excised as a propeptide.

This sequence belongs to the conotoxin T superfamily. Post-translationally, contains 2 disulfide bonds that can be either 'C1-C3, C2-C4' or 'C1-C4, C2-C3', since these disulfide connectivities have been observed for conotoxins with cysteine framework V (for examples, see AC P0DQQ7 and AC P81755). Expressed by the venom duct.

The protein resides in the secreted. This is Conotoxin Lt5.10 from Conus litteratus (Lettered cone).